A 453-amino-acid chain; its full sequence is Tol-Pal system protein TolB (453 aa).

The first 31 residues, 1–31 (MINNLSVSMTKVLKIILTIIIILFNTLSILA), serve as a signal peptide directing secretion.

It belongs to the TolB family. In terms of assembly, the Tol-Pal system is composed of five core proteins: the inner membrane proteins TolA, TolQ and TolR, the periplasmic protein TolB and the outer membrane protein Pal. They form a network linking the inner and outer membranes and the peptidoglycan layer.

It localises to the periplasm. Functionally, part of the Tol-Pal system, which plays a role in outer membrane invagination during cell division and is important for maintaining outer membrane integrity. The chain is Tol-Pal system protein TolB from Orientia tsutsugamushi (strain Boryong) (Rickettsia tsutsugamushi).